The primary structure comprises 465 residues: Cysteine--tRNA ligase (465 aa).

A Zn(2+)-binding site is contributed by C29. A 'HIGH' region motif is present at residues 31–41 (PTVYNYIHIGN). C209, H234, and E238 together coordinate Zn(2+). A 'KMSKS' region motif is present at residues 266–270 (KMSKS). K269 lines the ATP pocket. A Phosphoserine modification is found at S270.

This sequence belongs to the class-I aminoacyl-tRNA synthetase family. In terms of assembly, monomer. It depends on Zn(2+) as a cofactor.

It is found in the cytoplasm. It catalyses the reaction tRNA(Cys) + L-cysteine + ATP = L-cysteinyl-tRNA(Cys) + AMP + diphosphate. This Bacillus cereus (strain AH187) protein is Cysteine--tRNA ligase.